The sequence spans 1257 residues: Pesticidal crystal protein Cry12Aa (1257 aa).

This sequence belongs to the delta endotoxin family.

Functionally, endotoxin with nematicidal activity. The chain is Pesticidal crystal protein Cry12Aa (cry12Aa) from Bacillus thuringiensis.